A 359-amino-acid polypeptide reads, in one-letter code: MTSTSKGILRPFLIVCIILGCFMACLLIYIKPTNSWVFSPMESASSVLKMKNFFSTKTDYFNETTILVWVWPFGQTFDLTSCQAMFNIQGCHLTTDRSLYNKSHAVLIHHRDISWDLTNLPQQARPPFQKWIWMNLESPTHTPQKSGIEHLFNLTLTYRRDSDIQVPYGFLTVSTNPFVFEVPSKEKLVCWVVSNWNPEHARVKYYNELSKSIEIHTYGQAFGEYVNDKNLIPTISTCKFYLSFENSIHKDYITEKLYNAFLAGSVPVVLGPSRENYENYIPADSFIHVEDFNSPSELAKYLKEVDKNNKLYLSYFNWRKDFTVNLPRFWESHACLACDHVKRHQEYKSVGNLEKWFWN.

Residues 1–11 (MTSTSKGILRP) lie on the Cytoplasmic side of the membrane. Residues 12–32 (FLIVCIILGCFMACLLIYIKP) form a helical; Signal-anchor for type II membrane protein membrane-spanning segment. Residues 33–359 (TNSWVFSPME…VGNLEKWFWN (327 aa)) lie on the Lumenal side of the membrane. Asn62 is a glycosylation site (N-linked (GlcNAc...) asparagine). An acceptor-binding region spans residues 63-168 (ETTILVWVWP…RRDSDIQVPY (106 aa)). Residue Gln75 coordinates a beta-D-galactosyl-(1-&gt;4)-N-acetyl-beta-D-glucosaminyl derivative. 3 cysteine pairs are disulfide-bonded: Cys82–Cys335, Cys91–Cys338, and Cys190–Cys238. Asn101 carries an N-linked (GlcNAc...) asparagine glycan. Glu137 is a binding site for a beta-D-galactosyl-(1-&gt;4)-N-acetyl-beta-D-glucosaminyl derivative. Glu137 serves as the catalytic Nucleophile. A GDP-beta-L-fucose-binding site is contributed by Glu137. The N-linked (GlcNAc...) asparagine glycan is linked to Asn153. Positions 168, 192, 194, 195, 202, 226, 241, 246, 252, 255, and 256 each coordinate GDP-beta-L-fucose. Residues 169–326 (GFLTVSTNPF…NWRKDFTVNL (158 aa)) are donor-binding. Positions 327–359 (PRFWESHACLACDHVKRHQEYKSVGNLEKWFWN) are acceptor-binding.

The protein belongs to the glycosyltransferase 10 family. As to quaternary structure, homodimer. Post-translationally, N-glycosylated with complex-type N-glycans. In terms of tissue distribution, mainly detected in brain and kidney.

It localises to the golgi apparatus. The protein localises to the trans-Golgi network membrane. Its subcellular location is the golgi apparatus membrane. The enzyme catalyses a beta-D-galactosyl-(1-&gt;4)-N-acetyl-beta-D-glucosaminyl derivative + GDP-beta-L-fucose = a beta-D-galactosyl-(1-&gt;4)-[alpha-L-fucosyl-(1-&gt;3)]-N-acetyl-beta-D-glucosaminyl derivative + GDP + H(+). It carries out the reaction an alpha-Neu5Ac-(2-&gt;3)-beta-D-Gal-(1-&gt;4)-beta-D-GlcNAc-(1-&gt;3)-beta-D-Gal-(1-&gt;4)-beta-D-GlcNAc derivative + GDP-beta-L-fucose = an alpha-Neu5Ac-(2-&gt;3)-beta-D-Gal-(1-&gt;4)-beta-D-GlcNAc-(1-&gt;3)-beta-D-Gal-(1-&gt;4)-[alpha-L-Fuc-(1-&gt;3)]-beta-D-GlcNAc derivative + GDP + H(+). It catalyses the reaction alpha-N-glycoloylneuraminosyl-(2-&gt;3)-beta-D-galactosyl-(1-&gt;4)-N-acetyl-beta-D-glucosaminyl-(1-&gt;3)-beta-D-galactosyl-(1-&gt;4)-N-acetyl-beta-D-glucosaminyl-(1-&gt;3)-beta-D-galactosyl-(1-&gt;4)-beta-D-glucosyl-(1&lt;-&gt;1')-ceramide + GDP-beta-L-fucose = alpha-N-glycoloylneuraminosyl-(2-&gt;3)-beta-D-galactosyl-(1-&gt;4)-N-acetyl-beta-D-glucosaminyl-(1-&gt;3)-beta-D-galactosyl-(1-&gt;4)-[alpha-L-fucosyl-(1-&gt;3)]-N-acetyl-beta-D-glucosaminyl-(1-&gt;3)-beta-D-galactosyl-(1-&gt;4)-beta-D-glucosyl-(1&lt;-&gt;1')-ceramide + GDP + H(+). The catalysed reaction is alpha-D-galactosyl-(1-&gt;3)-beta-D-galactosyl-(1-&gt;4)-N-acetyl-beta-D-glucosaminyl-(1-&gt;3)-beta-D-galactosyl-(1-&gt;4)-beta-D-glucosyl-(1&lt;-&gt;1')-ceramide + GDP-beta-L-fucose = a neolactoside IV(3)-alpha-Gal,III(3)-alpha-Fuc-nLc4Cer + GDP + H(+). The enzyme catalyses a neolactoside nLc4Cer + GDP-beta-L-fucose = a neolactoside III(3)-alpha-Fuc-nLc4Cer + GDP + H(+). It carries out the reaction an N-acetyl-alpha-neuraminyl-(2-&gt;3)-beta-D-galactosyl-(1-&gt;4)-N-acetyl-beta-D-glucosaminyl derivative + GDP-beta-L-fucose = an alpha-Neu5Ac-(2-&gt;3)-beta-D-Gal-(1-&gt;4)-[alpha-L-Fuc-(1-&gt;3)]-beta-D-GlcNAc derivative + GDP + H(+). It catalyses the reaction beta-D-Gal-(1-&gt;4)-beta-D-GlcNAc-(1-&gt;3)-beta-D-Gal-(1-&gt;4)-D-Glc + GDP-beta-L-fucose = beta-D-Gal-(1-&gt;4)-[alpha-L-Fuc-(1-&gt;3)]-beta-D-GlcNAc-(1-&gt;3)-beta-D-Gal-(1-&gt;4)-D-Glc + GDP + H(+). The catalysed reaction is an alpha-L-Fuc-(1-&gt;2)-beta-D-Gal-(1-&gt;4)-beta-D-GlcNAc derivative + GDP-beta-L-fucose = an alpha-L-Fuc-(1-&gt;2)-beta-D-Gal-(1-&gt;4)-[alpha-L-Fuc-(1-&gt;3)]-beta-D-GlcNAc derivative + GDP + H(+). It participates in protein modification; protein glycosylation. It functions in the pathway glycolipid biosynthesis. With respect to regulation, activated by Mn2+. Catalyzes alpha(1-&gt;3) linkage of fucosyl moiety transferred from GDP-beta-L-fucose to N-acetyl glucosamine (GlcNAc) within type 2 lactosamine (LacNAc, beta-D-Gal-(1-&gt;4)-beta-D-GlcNAc-) glycan attached to glycolipids and N- or O-linked glycoproteins. Fucosylates distal type 2 LacNAc and its fucosylated (H-type 2 LacNAc) and sialylated (sialyl-type 2 LacNAc) derivatives to form Lewis x (Lex) (CD15) and Lewis y (Ley) antigenic epitopes involved in cell adhesion and differentiation. Generates Lex epitopes in the brain, presumably playing a role in the maintenance of neuronal stemness and neurite outgrowth in progenitor neural cells. Fucosylates the internal type 2 LacNAc unit of the polylactosamine chain to form VIM-2 antigen that serves as recognition epitope for SELE. Can also modify milk oligosaccharides in particular type 2 tetrasaccharide LNnT. The protein is 4-galactosyl-N-acetylglucosaminide 3-alpha-L-fucosyltransferase 9 of Mus musculus (Mouse).